The following is an 824-amino-acid chain: Molybdenum cofactor sulfurase (824 aa).

Lysine 274 bears the N6-(pyridoxal phosphate)lysine mark. The active site involves cysteine 433. The MOSC domain occupies 655–822 (CSSSKYRSCT…LQVGQQVYPS (168 aa)).

Belongs to the class-V pyridoxal-phosphate-dependent aminotransferase family. MOCOS subfamily. It depends on pyridoxal 5'-phosphate as a cofactor.

It carries out the reaction Mo-molybdopterin + L-cysteine + AH2 = thio-Mo-molybdopterin + L-alanine + A + H2O. It participates in cofactor biosynthesis; molybdopterin biosynthesis. Sulfurates the molybdenum cofactor. Sulfation of molybdenum is essential for xanthine dehydrogenase (XDH) and aldehyde oxidase (ADO) enzymes in which molybdenum cofactor is liganded by 1 oxygen and 1 sulfur atom in active form. This Oryza sativa subsp. japonica (Rice) protein is Molybdenum cofactor sulfurase (MCSU3).